Here is a 368-residue protein sequence, read N- to C-terminus: Peptide chain release factor 2 (368 aa).

Position 250 is an N5-methylglutamine (glutamine 250).

The protein belongs to the prokaryotic/mitochondrial release factor family. Methylated by PrmC. Methylation increases the termination efficiency of RF2.

It is found in the cytoplasm. In terms of biological role, peptide chain release factor 2 directs the termination of translation in response to the peptide chain termination codons UGA and UAA. In Chlamydia trachomatis serovar L2 (strain ATCC VR-902B / DSM 19102 / 434/Bu), this protein is Peptide chain release factor 2.